Reading from the N-terminus, the 95-residue chain is Putative membrane protein insertion efficiency factor (95 aa).

The disordered stretch occupies residues 72-95 (FDPVPDAPTSPSPSSSCSCKGPHP). Low complexity predominate over residues 83–95 (SPSSSCSCKGPHP).

Belongs to the UPF0161 family.

It is found in the cell inner membrane. Its function is as follows. Could be involved in insertion of integral membrane proteins into the membrane. The polypeptide is Putative membrane protein insertion efficiency factor (Xanthomonas axonopodis pv. citri (strain 306)).